The sequence spans 291 residues: ATP synthase gamma chain (291 aa).

This sequence belongs to the ATPase gamma chain family. In terms of assembly, F-type ATPases have 2 components, CF(1) - the catalytic core - and CF(0) - the membrane proton channel. CF(1) has five subunits: alpha(3), beta(3), gamma(1), delta(1), epsilon(1). CF(0) has three main subunits: a, b and c.

Its subcellular location is the cell inner membrane. Produces ATP from ADP in the presence of a proton gradient across the membrane. The gamma chain is believed to be important in regulating ATPase activity and the flow of protons through the CF(0) complex. This chain is ATP synthase gamma chain, found in Sinorhizobium medicae (strain WSM419) (Ensifer medicae).